Here is a 452-residue protein sequence, read N- to C-terminus: Caspase-2 (452 aa).

Ala2 is modified (N-acetylalanine). A propeptide spanning residues 2 to 169 (AAPSAGSWST…TVEHSLDNKD (168 aa)) is cleaved from the precursor. In terms of domain architecture, CARD spans 32–121 (MHPHHQETLK…GHLEDMLLTT (90 aa)). Ser157 is subject to Phosphoserine. Catalysis depends on residues His277 and Cys320. Positions 326 to 333 (DRGVDQQD) are excised as a propeptide. Over residues 327 to 336 (RGVDQQDGKN) the composition is skewed to basic and acidic residues. The interval 327–354 (RGVDQQDGKNHAGSPGCEESDAGKEKLP) is disordered. At Ser340 the chain carries Phosphoserine.

The protein belongs to the peptidase C14A family. Heterotetramer that consists of two anti-parallel arranged heterodimers, each one formed by a p18 subunit and a p12 subunit. Forms a complex named the PIDDosome with PIDD1 and CRADD. Interacts with NOL3 (via CARD domain); inhibits CASP2 activity in a phosphorylation-dependent manner. The mature protease can process its own propeptide, but not that of other caspases. Expressed at higher levels in the embryonic lung, liver and kidney than in the heart and brain. In adults, higher level expression is seen in the placenta, lung, kidney, and pancreas than in the heart, brain, liver and skeletal muscle.

It catalyses the reaction Strict requirement for an Asp residue at P1, with 316-Asp being essential for proteolytic activity and has a preferred cleavage sequence of Val-Asp-Val-Ala-Asp-|-.. Functionally, is a regulator of the cascade of caspases responsible for apoptosis execution. Might function by either activating some proteins required for cell death or inactivating proteins necessary for cell survival. Associates with PIDD1 and CRADD to form the PIDDosome, a complex that activates CASP2 and triggers apoptosis in response to genotoxic stress. Its function is as follows. Acts as a positive regulator of apoptosis. Acts as a negative regulator of apoptosis. In terms of biological role, may function as an endogenous apoptosis inhibitor that antagonizes caspase activation and cell death. This Homo sapiens (Human) protein is Caspase-2 (CASP2).